The primary structure comprises 249 residues: uncharacterized protein (249 aa).

Its subcellular location is the cytoplasm. It is found in the nucleus. This is an uncharacterized protein from Schizosaccharomyces pombe (strain 972 / ATCC 24843) (Fission yeast).